The following is a 509-amino-acid chain: Maturase K (509 aa).

It belongs to the intron maturase 2 family. MatK subfamily.

The protein resides in the plastid. The protein localises to the chloroplast. Functionally, usually encoded in the trnK tRNA gene intron. Probably assists in splicing its own and other chloroplast group II introns. This is Maturase K from Nicotiana sylvestris (Wood tobacco).